The following is a 228-amino-acid chain: Cytidylate kinase (228 aa).

Position 11–19 (11–19 (GPAGTGKSS)) interacts with ATP.

This sequence belongs to the cytidylate kinase family. Type 1 subfamily.

Its subcellular location is the cytoplasm. The catalysed reaction is CMP + ATP = CDP + ADP. It carries out the reaction dCMP + ATP = dCDP + ADP. This is Cytidylate kinase from Mycolicibacterium paratuberculosis (strain ATCC BAA-968 / K-10) (Mycobacterium paratuberculosis).